A 321-amino-acid polypeptide reads, in one-letter code: F420-non-reducing hydrogenase iron-sulfur subunit G (321 aa).

Belongs to the [NiFe]/[NiFeSe] hydrogenase small subunit family. The F420-non-reducing hydrogenase is composed of three subunits; MvhA, MvhD and MvhG. It forms a complex with the heterodisulfide reductase (Hdr).

It localises to the cytoplasm. Functionally, part of a complex that provides reducing equivalents for heterodisulfide reductase. The polypeptide is F420-non-reducing hydrogenase iron-sulfur subunit G (mvhG) (Archaeoglobus profundus (strain DSM 5631 / JCM 9629 / NBRC 100127 / Av18)).